Consider the following 156-residue polypeptide: Transcription elongation factor GreA (156 aa).

A coiled-coil region spans residues 46–73; it reads AEYHAAREKQSFIEGRIKELEALLSLAE.

The protein belongs to the GreA/GreB family.

Necessary for efficient RNA polymerase transcription elongation past template-encoded arresting sites. The arresting sites in DNA have the property of trapping a certain fraction of elongating RNA polymerases that pass through, resulting in locked ternary complexes. Cleavage of the nascent transcript by cleavage factors such as GreA or GreB allows the resumption of elongation from the new 3'terminus. GreA releases sequences of 2 to 3 nucleotides. The chain is Transcription elongation factor GreA from Cereibacter sphaeroides (strain ATCC 17025 / ATH 2.4.3) (Rhodobacter sphaeroides).